A 379-amino-acid polypeptide reads, in one-letter code: Queuine tRNA-ribosyltransferase (379 aa).

Asp-95 acts as the Proton acceptor in catalysis. Substrate contacts are provided by residues Asp-95–Phe-99, Asp-149, Gln-197, and Gly-224. The interval Gly-255 to Glu-261 is RNA binding. The active-site Nucleophile is Asp-274. Zn(2+) is bound by residues Cys-312, Cys-314, Cys-317, and His-343.

It belongs to the queuine tRNA-ribosyltransferase family. In terms of assembly, homodimer. Within each dimer, one monomer is responsible for RNA recognition and catalysis, while the other monomer binds to the replacement base PreQ1. Zn(2+) is required as a cofactor.

The catalysed reaction is 7-aminomethyl-7-carbaguanine + guanosine(34) in tRNA = 7-aminomethyl-7-carbaguanosine(34) in tRNA + guanine. It functions in the pathway tRNA modification; tRNA-queuosine biosynthesis. Functionally, catalyzes the base-exchange of a guanine (G) residue with the queuine precursor 7-aminomethyl-7-deazaguanine (PreQ1) at position 34 (anticodon wobble position) in tRNAs with GU(N) anticodons (tRNA-Asp, -Asn, -His and -Tyr). Catalysis occurs through a double-displacement mechanism. The nucleophile active site attacks the C1' of nucleotide 34 to detach the guanine base from the RNA, forming a covalent enzyme-RNA intermediate. The proton acceptor active site deprotonates the incoming PreQ1, allowing a nucleophilic attack on the C1' of the ribose to form the product. After dissociation, two additional enzymatic reactions on the tRNA convert PreQ1 to queuine (Q), resulting in the hypermodified nucleoside queuosine (7-(((4,5-cis-dihydroxy-2-cyclopenten-1-yl)amino)methyl)-7-deazaguanosine). This Solibacter usitatus (strain Ellin6076) protein is Queuine tRNA-ribosyltransferase.